Here is a 365-residue protein sequence, read N- to C-terminus: Histidinol-phosphate aminotransferase 2 (365 aa).

An N6-(pyridoxal phosphate)lysine modification is found at K222.

The protein belongs to the class-II pyridoxal-phosphate-dependent aminotransferase family. Histidinol-phosphate aminotransferase subfamily. As to quaternary structure, homodimer. Pyridoxal 5'-phosphate serves as cofactor.

It catalyses the reaction L-histidinol phosphate + 2-oxoglutarate = 3-(imidazol-4-yl)-2-oxopropyl phosphate + L-glutamate. The protein operates within amino-acid biosynthesis; L-histidine biosynthesis; L-histidine from 5-phospho-alpha-D-ribose 1-diphosphate: step 7/9. The sequence is that of Histidinol-phosphate aminotransferase 2 (hisC2) from Bordetella bronchiseptica (strain ATCC BAA-588 / NCTC 13252 / RB50) (Alcaligenes bronchisepticus).